The following is a 126-amino-acid chain: C-type natriuretic peptide (126 aa).

The signal sequence occupies residues 1-23 (MHLSQLLACALLLALLSLRPSEA). The interval 20–71 (PSEAKPGAPPKVPRTPSGEEVAEPQAAGGGQKKGDKTPGGGGANLKDDRSRL) is disordered. A propeptide spanning residues 24–73 (KPGAPPKVPRTPSGEEVAEPQAAGGGQKKGDKTPGGGGANLKDDRSRLLR) is cleaved from the precursor. A compositionally biased stretch (gly residues) spans 46–62 (AGGGQKKGDKTPGGGGA). An intrachain disulfide couples Cys110 to Cys126.

The protein belongs to the natriuretic peptide family. Post-translationally, degraded by IDE (in vitro).

Its subcellular location is the secreted. Functionally, hormone which plays a role in endochondral ossification through regulation of cartilaginous growth plate chondrocytes proliferation and differentiation. May also be vasoactive and natriuretic. Acts by specifically binding and stimulating NPR2 to produce cGMP. Binds the clearance receptor NPR3. This chain is C-type natriuretic peptide (NPPC), found in Bos taurus (Bovine).